We begin with the raw amino-acid sequence, 127 residues long: Riboflavin kinase (127 aa).

Gly10–Arg15 contacts CDP. Thr39 and Asn41 together coordinate Mg(2+). Residues Thr96 and Glu104 each contribute to the FMN site. Ile109–Arg112 lines the CDP pocket.

Belongs to the archaeal riboflavin kinase family. Requires Mg(2+) as cofactor.

The enzyme catalyses riboflavin + CTP = CDP + FMN + H(+). Its pathway is cofactor biosynthesis; FMN biosynthesis; FMN from riboflavin (CTP route): step 1/1. In terms of biological role, catalyzes the CTP-dependent phosphorylation of riboflavin (vitamin B2) to form flavin mononucleotide (FMN). The chain is Riboflavin kinase from Methanococcus maripaludis (strain C5 / ATCC BAA-1333).